The sequence spans 141 residues: Hemoglobin subunit alpha (141 aa).

A Globin domain is found at 1 to 141 (VLSSADKANI…VSTVLTSKYR (141 aa)). Serine 3 is modified (phosphoserine). An N6-succinyllysine mark is found at lysine 7 and lysine 11. Lysine 16 carries the post-translational modification N6-acetyllysine; alternate. Residue lysine 16 is modified to N6-succinyllysine; alternate. Tyrosine 24 carries the post-translational modification Phosphotyrosine. Position 40 is an N6-succinyllysine (lysine 40). Position 49 is a phosphoserine (serine 49). Position 58 (histidine 58) interacts with O2. Residue histidine 87 coordinates heme b. Position 102 is a phosphoserine (serine 102). At threonine 108 the chain carries Phosphothreonine. A phosphoserine mark is found at serine 124 and serine 131. 2 positions are modified to phosphothreonine: threonine 134 and threonine 137. A Phosphoserine modification is found at serine 138.

It belongs to the globin family. As to quaternary structure, heterotetramer of two alpha chains and two beta chains. Red blood cells.

Its function is as follows. Involved in oxygen transport from the lung to the various peripheral tissues. Hemopressin acts as an antagonist peptide of the cannabinoid receptor CNR1. Hemopressin-binding efficiently blocks cannabinoid receptor CNR1 and subsequent signaling. This Proteles cristata (Aardwolf) protein is Hemoglobin subunit alpha (HBA).